The chain runs to 247 residues: 5'-nucleotidase SurE (247 aa).

Positions 8, 9, 39, and 91 each coordinate a divalent metal cation.

Belongs to the SurE nucleotidase family. Requires a divalent metal cation as cofactor.

It is found in the cytoplasm. The catalysed reaction is a ribonucleoside 5'-phosphate + H2O = a ribonucleoside + phosphate. Functionally, nucleotidase that shows phosphatase activity on nucleoside 5'-monophosphates. In Pelobacter propionicus (strain DSM 2379 / NBRC 103807 / OttBd1), this protein is 5'-nucleotidase SurE.